Reading from the N-terminus, the 957-residue chain is Nitrite reductase [NAD(P)H] large subunit (957 aa).

FAD is bound at residue 44–79; that stretch reads YDRVHLTEYFAGRSAESLSLVEGDFFTQHGIELRLS. 193-225 is an NAD(+) binding site; it reads LREKISELGVGVHTSKATTEIVRNEQGLQLNFR. [2Fe-2S] cluster-binding residues include C423, C425, C457, and C460. [4Fe-4S] cluster-binding residues include C639, C645, C679, and C683. C683 is a binding site for siroheme.

The protein belongs to the nitrite and sulfite reductase 4Fe-4S domain family. In terms of assembly, homodimer which associates with NirD. Siroheme is required as a cofactor. Requires [2Fe-2S] cluster as cofactor. [4Fe-4S] cluster serves as cofactor. It depends on FAD as a cofactor.

The catalysed reaction is NH4(+) + 3 NADP(+) + 2 H2O = nitrite + 3 NADPH + 5 H(+). It carries out the reaction NH4(+) + 3 NAD(+) + 2 H2O = nitrite + 3 NADH + 5 H(+). It participates in nitrogen metabolism; nitrate reduction (assimilation). This Klebsiella oxytoca protein is Nitrite reductase [NAD(P)H] large subunit (nasB).